The following is a 371-amino-acid chain: Bifunctional enzyme IspD/IspF (371 aa).

The tract at residues 1-212 (MLDISLIMLG…CLIPPSNEHF (212 aa)) is 2-C-methyl-D-erythritol 4-phosphate cytidylyltransferase. A 2-C-methyl-D-erythritol 2,4-cyclodiphosphate synthase region spans residues 212–371 (FTGIGFDAHE…ANLKYYDWTK (160 aa)). 2 residues coordinate a divalent metal cation: Asp-218 and His-220. 4-CDP-2-C-methyl-D-erythritol 2-phosphate is bound by residues 218–220 (DAH) and 244–245 (HS). Residue His-252 participates in a divalent metal cation binding. Residues 266–268 (DIG), 271–275 (FPDTD), 342–345 (TTTE), Phe-349, and Arg-352 each bind 4-CDP-2-C-methyl-D-erythritol 2-phosphate.

This sequence in the N-terminal section; belongs to the IspD/TarI cytidylyltransferase family. IspD subfamily. In the C-terminal section; belongs to the IspF family. A divalent metal cation is required as a cofactor.

It carries out the reaction 2-C-methyl-D-erythritol 4-phosphate + CTP + H(+) = 4-CDP-2-C-methyl-D-erythritol + diphosphate. The enzyme catalyses 4-CDP-2-C-methyl-D-erythritol 2-phosphate = 2-C-methyl-D-erythritol 2,4-cyclic diphosphate + CMP. Its pathway is isoprenoid biosynthesis; isopentenyl diphosphate biosynthesis via DXP pathway; isopentenyl diphosphate from 1-deoxy-D-xylulose 5-phosphate: step 2/6. It participates in isoprenoid biosynthesis; isopentenyl diphosphate biosynthesis via DXP pathway; isopentenyl diphosphate from 1-deoxy-D-xylulose 5-phosphate: step 4/6. In terms of biological role, bifunctional enzyme that catalyzes the formation of 4-diphosphocytidyl-2-C-methyl-D-erythritol from CTP and 2-C-methyl-D-erythritol 4-phosphate (MEP) (IspD), and catalyzes the conversion of 4-diphosphocytidyl-2-C-methyl-D-erythritol 2-phosphate (CDP-ME2P) to 2-C-methyl-D-erythritol 2,4-cyclodiphosphate (ME-CPP) with a corresponding release of cytidine 5-monophosphate (CMP) (IspF). The protein is Bifunctional enzyme IspD/IspF of Campylobacter curvus (strain 525.92).